Consider the following 273-residue polypeptide: Dermonecrotic toxin LapSicTox-alphaIB1aii (273 aa).

His5 is a catalytic residue. Mg(2+) is bound by residues Glu25 and Asp27. His41 functions as the Nucleophile in the catalytic mechanism. Cystine bridges form between Cys45/Cys51 and Cys47/Cys190. Asp85 contributes to the Mg(2+) binding site. Asn250 is a glycosylation site (N-linked (GlcNAc...) asparagine).

This sequence belongs to the arthropod phospholipase D family. Class II subfamily. The cofactor is Mg(2+). In terms of tissue distribution, expressed by the venom gland.

The protein localises to the secreted. The catalysed reaction is an N-(acyl)-sphingosylphosphocholine = an N-(acyl)-sphingosyl-1,3-cyclic phosphate + choline. It carries out the reaction an N-(acyl)-sphingosylphosphoethanolamine = an N-(acyl)-sphingosyl-1,3-cyclic phosphate + ethanolamine. It catalyses the reaction a 1-acyl-sn-glycero-3-phosphocholine = a 1-acyl-sn-glycero-2,3-cyclic phosphate + choline. The enzyme catalyses a 1-acyl-sn-glycero-3-phosphoethanolamine = a 1-acyl-sn-glycero-2,3-cyclic phosphate + ethanolamine. Dermonecrotic toxins cleave the phosphodiester linkage between the phosphate and headgroup of certain phospholipids (sphingolipid and lysolipid substrates), forming an alcohol (often choline) and a cyclic phosphate. This toxin acts on sphingomyelin (SM). It may also act on ceramide phosphoethanolamine (CPE), lysophosphatidylcholine (LPC) and lysophosphatidylethanolamine (LPE), but not on lysophosphatidylserine (LPS), and lysophosphatidylglycerol (LPG). It acts by transphosphatidylation, releasing exclusively cyclic phosphate products as second products. Induces dermonecrosis, hemolysis, increased vascular permeability, edema, inflammatory response, and platelet aggregation. The sequence is that of Dermonecrotic toxin LapSicTox-alphaIB1aii from Loxosceles apachea (Apache recluse spider).